A 359-amino-acid chain; its full sequence is Mitochondrial glutathione transporter SLC25A39 (359 aa).

At 1-14 the chain is on the mitochondrial intermembrane side; that stretch reads MDDQDPGGISPLQQ. Solcar repeat units lie at residues 9-151, 159-243, and 253-347; these read ISPL…LKAF, SDLY…VKSQ, and TSVG…GKSF. The helical transmembrane segment at 15–35 threads the bilayer; the sequence is MVASGAGAVVTSLFMTPLDVV. Residues 36-121 lie on the Mitochondrial matrix side of the membrane; it reads KVRLQSQRPT…VKIVRHEGTR (86 aa). [2Fe-2S] cluster-binding residues include Cys-74, Cys-78, Cys-88, and Cys-94. The helical transmembrane segment at 122-142 threads the bilayer; that stretch reads TLWSGLPATLVMTVPATAIYF. Residues 143 to 164 are Mitochondrial intermembrane-facing; the sequence is TAYDQLKAFLCGQSLTSDLYAP. The chain crosses the membrane as a helical span at residues 165-185; it reads MVAGALARMGTVTVVSPLELV. At 186 to 214 the chain is on the mitochondrial matrix side; sequence RTKLQAQHVSYRELAACVQAAVAQGGWRS. A helical membrane pass occupies residues 215-235; it reads LWLGWGPTALRDVPFSALYWF. At 236 to 255 the chain is on the mitochondrial intermembrane side; the sequence is NYELVKSQLNGPRQKEQTSV. A helical transmembrane segment spans residues 256–276; it reads GISFVAGGISGMVAATLTLPF. Residues 277-317 lie on the Mitochondrial matrix side of the membrane; sequence DVVKTQRQMSLGAVEAMRVKPPRVDSTWLLLRRIQAESGTR. A helical transmembrane segment spans residues 318 to 338; sequence GLFAGFLPRIIKAAPSCAIMI. Residues 339-359 lie on the Mitochondrial intermembrane side of the membrane; that stretch reads STYEFGKSFFHRLNQEQPLGH.

This sequence belongs to the mitochondrial carrier (TC 2.A.29) family. In terms of processing, cleaved and degraded by AFG3L2; degradation by AFG3L2 is regulated by the ability of SLC25A39 to bind iron-sulfur. In absence of mitochondrial glutathione, SLC25A39 binds iron-sulfur, preventing cleavage and degradation by AFG3L2. The presence of mitochondrial glutathione prevents iron-sulfur-binding to SLC25A39, promoting cleavage and degradation by AFG3L2.

The protein resides in the mitochondrion inner membrane. The enzyme catalyses glutathione(in) = glutathione(out). The activity of SLC25A39 is regulated by levels of mitochondrial glutathione via its ability to bind [2Fe-2S] iron-sulfur cluster. Upon physiological levels of mitochondrial glutathione, glutathione prevents iron-sulfur-binding to SLC25A39 promoting cleavage and degradation by AFG3L2. Upon depletion of mitochondrial glutathione, SLC25A39 binds iron-sulfur, preventing cleavage and degradation by AFG3L2. In terms of biological role, mitochondrial transporter required for glutathione import into mitochondria. Glutathione, which plays key roles in oxidative metabolism, is produced exclusively in the cytosol and is imported in many organelles. Mitochondrial glutathione is required for the activity and stability of proteins containing iron-sulfur clusters, as well as erythropoiesis. The polypeptide is Mitochondrial glutathione transporter SLC25A39 (Slc25a39) (Rattus norvegicus (Rat)).